A 476-amino-acid chain; its full sequence is Viral inhibitor of caspase-8-induced apoptosis (476 aa).

It belongs to the herpesviridae US22 family. Interacts with host pro-caspase-8/CASP8; this interaction inhibits CASP8 activation.

Functionally, plays a role in the inhibition of apoptosis by interacting with the pro-domain of pro-caspase-8/CASP8 and thus preventing its activation. The sequence is that of Viral inhibitor of caspase-8-induced apoptosis (UL36) from Human cytomegalovirus (strain Merlin) (HHV-5).